Here is a 176-residue protein sequence, read N- to C-terminus: Probable non-specific lipid-transfer protein 1 (176 aa).

Positions 1–37 (MRTVSAPSAVALVVIVAAGLAWTSLASVAPPAPAPGS) are cleaved as a signal peptide. Disulfide bonds link Cys-41-Cys-89, Cys-51-Cys-66, Cys-67-Cys-112, and Cys-87-Cys-128. The disordered stretch occupies residues 139 to 176 (QLPVSLRHGPVTGPSDPAHKARLERPQIRVPPPAPEKA). Over residues 155-165 (PAHKARLERPQ) the composition is skewed to basic and acidic residues. A compositionally biased stretch (pro residues) spans 167–176 (RVPPPAPEKA).

It belongs to the plant LTP family.

Functionally, plant non-specific lipid-transfer proteins transfer phospholipids as well as galactolipids across membranes. May play a role in wax or cutin deposition in the cell walls of expanding epidermal cells and certain secretory tissues. The polypeptide is Probable non-specific lipid-transfer protein 1 (Parietaria judaica (Pellitory-of-the-wall)).